A 760-amino-acid chain; its full sequence is uncharacterized protein (760 aa).

An N-terminal signal peptide occupies residues 1–23 (MVIKKGFFALSSCTLGLGLILTA). Residue Cys24 is the site of N-palmitoyl cysteine attachment. A lipid anchor (S-diacylglycerol cysteine) is attached at Cys24. Disordered stretches follow at residues 220 to 262 (ANGK…NSDN) and 443 to 482 (YEIK…NQTS). Polar residues-rich tracts occupy residues 222-257 (GKTT…SQDA) and 448-472 (PTNS…GKEQ).

The protein belongs to the MG185/MG260 family.

The protein resides in the cell membrane. This is an uncharacterized protein from Mycoplasma pneumoniae (strain ATCC 29342 / M129 / Subtype 1) (Mycoplasmoides pneumoniae).